The following is a 180-amino-acid chain: GTP cyclohydrolase 1 (180 aa).

Positions 71, 74, and 142 each coordinate Zn(2+).

This sequence belongs to the GTP cyclohydrolase I family. Toroid-shaped homodecamer, composed of two pentamers of five dimers.

The enzyme catalyses GTP + H2O = 7,8-dihydroneopterin 3'-triphosphate + formate + H(+). It participates in cofactor biosynthesis; 7,8-dihydroneopterin triphosphate biosynthesis; 7,8-dihydroneopterin triphosphate from GTP: step 1/1. The protein is GTP cyclohydrolase 1 (folE) of Helicobacter pylori (strain J99 / ATCC 700824) (Campylobacter pylori J99).